A 169-amino-acid polypeptide reads, in one-letter code: Ribosome maturation factor RimM (169 aa).

Residues 97–169 (EDEYYWTDLV…IITADWGLDY (73 aa)) enclose the PRC barrel domain.

This sequence belongs to the RimM family. As to quaternary structure, binds ribosomal protein uS19.

The protein resides in the cytoplasm. In terms of biological role, an accessory protein needed during the final step in the assembly of 30S ribosomal subunit, possibly for assembly of the head region. Essential for efficient processing of 16S rRNA. May be needed both before and after RbfA during the maturation of 16S rRNA. It has affinity for free ribosomal 30S subunits but not for 70S ribosomes. The protein is Ribosome maturation factor RimM of Neisseria meningitidis serogroup C / serotype 2a (strain ATCC 700532 / DSM 15464 / FAM18).